A 143-amino-acid polypeptide reads, in one-letter code: Nucleoside diphosphate kinase (143 aa).

ATP contacts are provided by Lys11, Phe59, Arg87, Thr93, Arg104, and Asn114. His117 serves as the catalytic Pros-phosphohistidine intermediate.

It belongs to the NDK family. As to quaternary structure, homotetramer. It depends on Mg(2+) as a cofactor.

The protein localises to the cytoplasm. It catalyses the reaction a 2'-deoxyribonucleoside 5'-diphosphate + ATP = a 2'-deoxyribonucleoside 5'-triphosphate + ADP. The enzyme catalyses a ribonucleoside 5'-diphosphate + ATP = a ribonucleoside 5'-triphosphate + ADP. Major role in the synthesis of nucleoside triphosphates other than ATP. The ATP gamma phosphate is transferred to the NDP beta phosphate via a ping-pong mechanism, using a phosphorylated active-site intermediate. The polypeptide is Nucleoside diphosphate kinase (Escherichia coli O7:K1 (strain IAI39 / ExPEC)).